Consider the following 95-residue polypeptide: Small ribosomal subunit protein bS6 (95 aa).

The protein belongs to the bacterial ribosomal protein bS6 family.

Binds together with bS18 to 16S ribosomal RNA. The protein is Small ribosomal subunit protein bS6 of Clostridium beijerinckii (strain ATCC 51743 / NCIMB 8052) (Clostridium acetobutylicum).